The chain runs to 449 residues: Probable glycosyltransferase 5 (449 aa).

The segment covering 1–14 has biased composition (basic and acidic residues); sequence MMEKHGGKVTSDRR. Positions 1 to 24 are disordered; it reads MMEKHGGKVTSDRRAGRRQHGQRC. Residues 1 to 28 are Cytoplasmic-facing; that stretch reads MMEKHGGKVTSDRRAGRRQHGQRCSASD. The helical; Signal-anchor for type II membrane protein transmembrane segment at 29–49 threads the bilayer; that stretch reads AAPLVVVVILIVAALFLILGP. The Lumenal segment spans residues 50–449; it reads TGSSSFTVPR…HPTFRAARPT (400 aa). The segment at 74-109 is disordered; that stretch reads APPPPPPPAQMQAGANASSEEDSGLPPPRQLTDPPY. N-linked (GlcNAc...) asparagine glycosylation is found at N89, N413, and N422.

This sequence belongs to the glycosyltransferase 34 family.

It localises to the golgi apparatus membrane. Its function is as follows. Probable glycosyltransferase that may be involved in the biosynthesis of xyloglucan. This is Probable glycosyltransferase 5 from Oryza sativa subsp. japonica (Rice).